The chain runs to 223 residues: Neurotrophic factor BDNF precursor form (223 aa).

A signal peptide spans 1 to 5 (SCMKA). A propeptide spanning residues 6–114 (APMKEVSIRG…AANMSMRVRR (109 aa)) is cleaved from the precursor. An N-linked (GlcNAc...) asparagine glycan is attached at Asn-107. Intrachain disulfides connect Cys-127-Cys-194 and Cys-172-Cys-223.

The protein belongs to the NGF-beta family.

It localises to the secreted. Functionally, promotes the survival of neuronal populations that are all located either in the central nervous system or directly connected to it. The chain is Neurotrophic factor BDNF precursor form (BDNF) from Lichanura trivirgata (Rosy boa).